Here is a 140-residue protein sequence, read N- to C-terminus: Large ribosomal subunit protein uL14 (140 aa).

Belongs to the universal ribosomal protein uL14 family.

This is Large ribosomal subunit protein uL14 (RPL23) from Nicotiana tabacum (Common tobacco).